Consider the following 391-residue polypeptide: MGEENQPNYTISQENWSLHRKGYDDQQRHQEKVQEAIKNNLPDLVTEESIVMSNGKDVVKIPIRSLDEYKIRYNYDKNKHVGQGNGDSKVGDVVARDGSGGQKQKGPGKGQGAGDAAGEDYYEAEVSILELEQAFFRELELPNLKRKEMDENRIEHVEFNDIRKTGLWGNIDKKRTMISAYKRNAMSGKASFHPIHQEDLKFRTWNEVLKPDSKAVVLAMMDTSGSMGIWEKYMARSFFFWMTRFLRTKYETVDIEFIAHHTEAKVVTEEEFFSKGESGGTICSSVYKKALELIDNKYSPDRYNIYPFHFSDGDNLTSDNARCVKLVEELMKKCNMFGYGEVNQYNRHSTLMSAYKNIKDDNFRYYILKQKADVFHAMKSFFREESGEKMA.

Residues 1–16 (MGEENQPNYTISQENW) are compositionally biased toward polar residues. Disordered stretches follow at residues 1–31 (MGEE…RHQE) and 80–117 (HVGQ…GDAA). The span at 21–31 (KGYDDQQRHQE) shows a compositional bias: basic and acidic residues. Gly residues predominate over residues 98 to 115 (GSGGQKQKGPGKGQGAGD).

Belongs to the UPF0229 family.

The polypeptide is UPF0229 protein BCB4264_A0587 (Bacillus cereus (strain B4264)).